A 690-amino-acid chain; its full sequence is Ectopic P granules protein 2 (690 aa).

Coiled-coil stretches lie at residues 20 to 181 (IELA…EREV), 359 to 409 (ELLR…TIQE), 458 to 494 (LESG…SLLL), and 560 to 643 (ATIE…ETKR). Residues 61–64 (YSTL) carry the LIR 1 motif. The interval 381–385 (DFKIL) is required for interaction with lgg-1. Positions 666 to 690 (EELDEEPKASTESEEKAEWEMVDEE) are disordered. Residues 671–684 (EPKASTESEEKAEW) show a composition bias toward basic and acidic residues. The LIR 2 signature appears at 684–687 (WEMV).

As to quaternary structure, interacts with sepa-1. Interacts (via the LIR motifs) with lgg-1 and lgg-2. Shows strong interaction with lgg-1 and weak interaction with lgg-2.

The protein resides in the cytoplasm. Its function is as follows. Involved in autophagy. Thought to act as an adapter protein that brings PGL granules to autophagic structures containing lgg-1. Association with other adapters such as sepa-1 is required for the accumulation and degradation of germ cell specific P-granules by autophagy in somatic cells. This ensures exclusive localization of the P-granules in germ cells. May also play a role in the removal of sepa-1 from somatic cells. The protein is Ectopic P granules protein 2 of Caenorhabditis elegans.